Here is a 132-residue protein sequence, read N- to C-terminus: Small ribosomal subunit protein uS11 (132 aa).

A disordered region spans residues Met-1 to Ala-24. Residues Ala-7–Arg-16 show a composition bias toward basic residues.

Belongs to the universal ribosomal protein uS11 family. Part of the 30S ribosomal subunit. Interacts with proteins S7 and S18. Binds to IF-3.

Located on the platform of the 30S subunit, it bridges several disparate RNA helices of the 16S rRNA. Forms part of the Shine-Dalgarno cleft in the 70S ribosome. The polypeptide is Small ribosomal subunit protein uS11 (Bifidobacterium adolescentis (strain ATCC 15703 / DSM 20083 / NCTC 11814 / E194a)).